A 517-amino-acid polypeptide reads, in one-letter code: Ovoinhibitor (517 aa).

7 Kazal-like domains span residues phenylalanine 67 to proline 132, lysine 133 to leucine 197, glutamate 198 to glutamine 263, glutamate 264 to glutamate 329, arginine 330 to glutamate 394, glutamate 395 to glutamate 460, and aspartate 461 to cysteine 517. N-linked (GlcNAc...) asparagine glycosylation is present at asparagine 72. 21 cysteine pairs are disulfide-bonded: cysteine 73–cysteine 112, cysteine 90–cysteine 109, cysteine 98–cysteine 130, cysteine 139–cysteine 177, cysteine 155–cysteine 174, cysteine 163–cysteine 195, cysteine 204–cysteine 243, cysteine 221–cysteine 240, cysteine 229–cysteine 261, cysteine 270–cysteine 309, cysteine 287–cysteine 306, cysteine 295–cysteine 327, cysteine 336–cysteine 374, cysteine 352–cysteine 371, cysteine 360–cysteine 392, cysteine 401–cysteine 440, cysteine 418–cysteine 437, cysteine 426–cysteine 458, cysteine 467–cysteine 499, cysteine 477–cysteine 496, and cysteine 485–cysteine 517. N-linked (GlcNAc...) asparagine glycosylation occurs at asparagine 186. N-linked (GlcNAc...) asparagine glycosylation occurs at asparagine 506.

In terms of processing, glycosylated. In terms of tissue distribution, expressed in oviduct (at protein level). Expressed in egg white (at protein level). Expressed in egg yolk plasma of non-fertilized eggs (at protein level). Expressed in the magnum of the oviduct (at protein level). Expressed in oviduct. Expressed in liver. Expressed in the cortico-medullary border region of the bursa of Fabricius by the bursal secretory dendritic-like cells. Highly expressed in the magnum of the oviduct, and at a lower level in uterus. Weakly expressed in white isthmus and very weakly in infundibulum. Not expressed in duodenum and kidney.

Its subcellular location is the secreted. Serine protease inhibitor involved in antimicrobial egg defense preventing contamination of table eggs (non-fertilized eggs) and protecting the chick embryo (fertilized eggs). Inhibits trypsin, chymotrypsin, elastase, subtilisin and a proteinase of fungus Aspergillus oryzae. Inhibits calcium-activated potassium channels KCNMA1 (bovine) and slo (Drosophila). Has antibacterial activity against B.thuringiensis LMSA 3.06.004, but not against S.aureus CIP 103 811, P.aeruginosa PAO1, B.cereus ATCC6464 or B.subtilis ATCC 6633. The protein is Ovoinhibitor of Gallus gallus (Chicken).